We begin with the raw amino-acid sequence, 594 residues long: Beta-mannosyltransferase 3 (594 aa).

Over 1 to 6 (MRIRSN) the chain is Cytoplasmic. A helical transmembrane segment spans residues 7–27 (VLLLSTAGALALVWFAVVFSW). At 28 to 594 (DDKSIFGIPT…KDEVKDTKAK (567 aa)) the chain is on the extracellular side. An N-linked (GlcNAc...) asparagine glycan is attached at Asn305. The stretch at 512–594 (VTRGEEDRLK…KDEVKDTKAK (83 aa)) forms a coiled coil. The segment covering 517–558 (EDRLKNKEKERKIEEKRKKEEERKKKEEEKKKKEEEEKKKKE) has biased composition (basic and acidic residues). Positions 517–564 (EDRLKNKEKERKIEEKRKKEEERKKKEEEKKKKEEEEKKKKEEEEEEE) are disordered.

This sequence belongs to the BMT family.

The protein resides in the membrane. Beta-mannosyltransferase involved in cell wall biosynthesis. The chain is Beta-mannosyltransferase 3 (BMT3) from Komagataella phaffii (strain ATCC 76273 / CBS 7435 / CECT 11047 / NRRL Y-11430 / Wegner 21-1) (Yeast).